Reading from the N-terminus, the 645-residue chain is Cyclin-D-binding Myb-like transcription factor 1 (645 aa).

Disordered regions lie at residues 34 to 71 (QNDG…STEY) and 95 to 119 (RDEE…KKGE). Composition is skewed to acidic residues over residues 36 to 46 (DGEDLGSDETT) and 95 to 105 (RDEELESDDLS). One can recognise a Myb-like 1 domain in the interval 219–257 (GKYTDEEINKLKELRQKHGNDWATIGSALGRSASSVKDR). The 66-residue stretch at 262–327 (KDTCNTGKWT…KWLNYLNWKQ (66 aa)) folds into the HTH myb-type domain. The segment at residues 300–323 (WASVAELVGTRSEKQCRSKWLNYL) is a DNA-binding region (H-T-H motif). The Myb-like 2 domain maps to 333–382 (WTKEDDINLVRRIAELEVEDENEINWDILASGWSSVRSPQWLRSKWWTIK). A disordered region spans residues 568–645 (VKEEPSENQT…ILENQEEGSN (78 aa)). The segment covering 587–597 (EQSKQGEKTLD) has biased composition (basic and acidic residues). The span at 615 to 625 (IPTNEDISSDS) shows a compositional bias: polar residues.

Belongs to the DMTF1 family.

The protein resides in the nucleus. Transcriptional activator which activates the CDKN2A/ARF locus in response to Ras-Raf signaling, thereby promoting p53/TP53-dependent growth arrest. Binds to the consensus sequence 5'-CCCG[GT]ATGT-3'. The sequence is that of Cyclin-D-binding Myb-like transcription factor 1 (dmtf1) from Danio rerio (Zebrafish).